The primary structure comprises 156 residues: Cyclic pyranopterin monophosphate synthase (156 aa).

Substrate-binding positions include 75-77 and 111-112; these read LCH and ME. Residue D126 is part of the active site.

Belongs to the MoaC family. In terms of assembly, homohexamer; trimer of dimers.

It carries out the reaction (8S)-3',8-cyclo-7,8-dihydroguanosine 5'-triphosphate = cyclic pyranopterin phosphate + diphosphate. It participates in cofactor biosynthesis; molybdopterin biosynthesis. Catalyzes the conversion of (8S)-3',8-cyclo-7,8-dihydroguanosine 5'-triphosphate to cyclic pyranopterin monophosphate (cPMP). The chain is Cyclic pyranopterin monophosphate synthase from Corynebacterium glutamicum (strain ATCC 13032 / DSM 20300 / JCM 1318 / BCRC 11384 / CCUG 27702 / LMG 3730 / NBRC 12168 / NCIMB 10025 / NRRL B-2784 / 534).